A 365-amino-acid polypeptide reads, in one-letter code: Flagellar P-ring protein (365 aa).

The N-terminal stretch at 1-20 (MKLPHFFVLAALVLSGAAHA) is a signal peptide.

This sequence belongs to the FlgI family. In terms of assembly, the basal body constitutes a major portion of the flagellar organelle and consists of four rings (L,P,S, and M) mounted on a central rod.

The protein resides in the periplasm. The protein localises to the bacterial flagellum basal body. Its function is as follows. Assembles around the rod to form the L-ring and probably protects the motor/basal body from shearing forces during rotation. This is Flagellar P-ring protein from Thiobacillus denitrificans (strain ATCC 25259 / T1).